A 193-amino-acid polypeptide reads, in one-letter code: MTPRPGGEWSSALSHLALGAVSLHAALSTAQANRGAAAGFLLQALATATMLASGLGTDEDCLAGAWVATVIGLPLLAFDFHWVNGDCSSANLLLGGGMVLAVAGDHLGAEGRSVAGQAVVLVVAVTILIVAVFTTNSYGMWGGVMLGAAGLLSRLEEDRLMLLLPKEDICRWALAGGSWAYHRALHTQRLQWE.

The signal sequence occupies residues 1–32 (MTPRPGGEWSSALSHLALGAVSLHAALSTAQA). The next 4 helical transmembrane spans lie at 35-55 (GAAAGFLLQALATATMLASGL), 63-83 (AGAWVATVIGLPLLAFDFHWV), 89-109 (SANLLLGGGMVLAVAGDHLGA), and 114-134 (VAGQAVVLVVAVTILIVAVFT).

It is found in the membrane. This Bos taurus (Bovine) protein is Transmembrane protein 276.